Consider the following 254-residue polypeptide: Cell division protein FtsQ (254 aa).

At M1–A27 the chain is on the cytoplasmic side. Residues F28 to L48 traverse the membrane as a helical segment. At E49–R254 the chain is on the periplasmic side. One can recognise a POTRA domain in the interval K54–Y124.

The protein belongs to the FtsQ/DivIB family. FtsQ subfamily. In terms of assembly, part of a complex composed of FtsB, FtsL and FtsQ.

The protein resides in the cell inner membrane. Essential cell division protein. May link together the upstream cell division proteins, which are predominantly cytoplasmic, with the downstream cell division proteins, which are predominantly periplasmic. May control correct divisome assembly. This chain is Cell division protein FtsQ, found in Haemophilus influenzae (strain ATCC 51907 / DSM 11121 / KW20 / Rd).